We begin with the raw amino-acid sequence, 328 residues long: Phosphatidylglycerol--prolipoprotein diacylglyceryl transferase (328 aa).

Helical transmembrane passes span V15–S35, F58–Y78, and G106–T126. Residue R156 coordinates a 1,2-diacyl-sn-glycero-3-phospho-(1'-sn-glycerol). 2 helical membrane-spanning segments follow: residues G242–L262 and I289–V309.

The protein belongs to the Lgt family.

The protein resides in the cell inner membrane. The enzyme catalyses L-cysteinyl-[prolipoprotein] + a 1,2-diacyl-sn-glycero-3-phospho-(1'-sn-glycerol) = an S-1,2-diacyl-sn-glyceryl-L-cysteinyl-[prolipoprotein] + sn-glycerol 1-phosphate + H(+). It functions in the pathway protein modification; lipoprotein biosynthesis (diacylglyceryl transfer). In terms of biological role, catalyzes the transfer of the diacylglyceryl group from phosphatidylglycerol to the sulfhydryl group of the N-terminal cysteine of a prolipoprotein, the first step in the formation of mature lipoproteins. The polypeptide is Phosphatidylglycerol--prolipoprotein diacylglyceryl transferase (Borrelia garinii subsp. bavariensis (strain ATCC BAA-2496 / DSM 23469 / PBi) (Borreliella bavariensis)).